Consider the following 380-residue polypeptide: Glucose-1-phosphate adenylyltransferase (380 aa).

Alpha-D-glucose 1-phosphate is bound by residues glycine 164, 179-180 (EK), and serine 190.

The protein belongs to the bacterial/plant glucose-1-phosphate adenylyltransferase family. As to quaternary structure, homotetramer.

The catalysed reaction is alpha-D-glucose 1-phosphate + ATP + H(+) = ADP-alpha-D-glucose + diphosphate. The protein operates within glycan biosynthesis; glycogen biosynthesis. In terms of biological role, involved in the biosynthesis of ADP-glucose, a building block required for the elongation reactions to produce glycogen. Catalyzes the reaction between ATP and alpha-D-glucose 1-phosphate (G1P) to produce pyrophosphate and ADP-Glc. This Streptococcus sanguinis (strain SK36) protein is Glucose-1-phosphate adenylyltransferase.